Here is a 68-residue protein sequence, read N- to C-terminus: Conotoxin TsMMSK-021 (68 aa).

Positions 1 to 20 (MMSKLGVLLTICLLLFPLTA) are cleaved as a signal peptide. The propeptide occupies 21 to 50 (VPLDGDQHADRPADRMQDISSEQHPLFDPV). 3 disulfides stabilise this stretch: C53–C66, C54–C62, and C58–C65. Residue P64 is modified to 4-hydroxyproline.

The protein belongs to the conotoxin M superfamily. In terms of tissue distribution, expressed by the venom duct.

The protein resides in the secreted. This chain is Conotoxin TsMMSK-021, found in Conus tessulatus (Tessellate cone).